Consider the following 216-residue polypeptide: Ribosomal RNA small subunit methyltransferase G (216 aa).

Residues glycine 81, leucine 86, 132–133 (VE), and arginine 147 contribute to the S-adenosyl-L-methionine site.

It belongs to the methyltransferase superfamily. RNA methyltransferase RsmG family.

The protein localises to the cytoplasm. The catalysed reaction is guanosine(527) in 16S rRNA + S-adenosyl-L-methionine = N(7)-methylguanosine(527) in 16S rRNA + S-adenosyl-L-homocysteine. Its function is as follows. Specifically methylates the N7 position of guanine in position 527 of 16S rRNA. The protein is Ribosomal RNA small subunit methyltransferase G of Hydrogenovibrio crunogenus (strain DSM 25203 / XCL-2) (Thiomicrospira crunogena).